A 799-amino-acid polypeptide reads, in one-letter code: Cadherin-8 (799 aa).

Positions 1–29 (MPERLAETLMDLWTPLIILWITLPSCVYT) are cleaved as a signal peptide. The propeptide occupies 30 to 61 (APMNQAHVLTTGSPLELSRQSEDMRILSRSKR). 5 Cadherin domains span residues 62–167 (GWVW…APEF), 168–276 (LNGP…PPKF), 277–391 (AQSL…PPVF), 392–494 (SSPT…DNAP), and 495–616 (EFAS…YVLP). The Extracellular portion of the chain corresponds to 62 to 621 (GWVWNQMFVL…AYVLPIGLSM (560 aa)). N188 carries an N-linked (GlcNAc...) asparagine glycan. N-linked (GlcNAc...) asparagine glycosylation is found at N463, N473, and N544. Residues 622–642 (GALIAILACIILLLVIVVLFV) form a helical membrane-spanning segment. The Cytoplasmic portion of the chain corresponds to 643-799 (TLRRHKNEPL…YSVGESDKET (157 aa)). S795 is subject to Phosphoserine.

It is found in the cell membrane. Cadherins are calcium-dependent cell adhesion proteins. They preferentially interact with themselves in a homophilic manner in connecting cells; cadherins may thus contribute to the sorting of heterogeneous cell types. This Mus musculus (Mouse) protein is Cadherin-8 (Cdh8).